We begin with the raw amino-acid sequence, 284 residues long: Bifunctional protein FolD (284 aa).

166–168 is an NADP(+) binding site; the sequence is GAS.

The protein belongs to the tetrahydrofolate dehydrogenase/cyclohydrolase family. As to quaternary structure, homodimer.

The catalysed reaction is (6R)-5,10-methylene-5,6,7,8-tetrahydrofolate + NADP(+) = (6R)-5,10-methenyltetrahydrofolate + NADPH. It catalyses the reaction (6R)-5,10-methenyltetrahydrofolate + H2O = (6R)-10-formyltetrahydrofolate + H(+). It participates in one-carbon metabolism; tetrahydrofolate interconversion. In terms of biological role, catalyzes the oxidation of 5,10-methylenetetrahydrofolate to 5,10-methenyltetrahydrofolate and then the hydrolysis of 5,10-methenyltetrahydrofolate to 10-formyltetrahydrofolate. This chain is Bifunctional protein FolD, found in Legionella pneumophila subsp. pneumophila (strain Philadelphia 1 / ATCC 33152 / DSM 7513).